The primary structure comprises 540 residues: Membrane protein insertase YidC (540 aa).

5 helical membrane passes run 7 to 27 (LLVL…QMDY), 345 to 365 (IVSN…GILY), 415 to 435 (LGGC…YWTF), 453 to 473 (LSAQ…MFLL), and 494 to 514 (PLIF…YWLV).

This sequence belongs to the OXA1/ALB3/YidC family. Type 1 subfamily. As to quaternary structure, interacts with the Sec translocase complex via SecD. Specifically interacts with transmembrane segments of nascent integral membrane proteins during membrane integration.

Its subcellular location is the cell inner membrane. Its function is as follows. Required for the insertion and/or proper folding and/or complex formation of integral membrane proteins into the membrane. Involved in integration of membrane proteins that insert both dependently and independently of the Sec translocase complex, as well as at least some lipoproteins. Aids folding of multispanning membrane proteins. In Mannheimia succiniciproducens (strain KCTC 0769BP / MBEL55E), this protein is Membrane protein insertase YidC.